Reading from the N-terminus, the 103-residue chain is Large ribosomal subunit protein eL14 (103 aa).

It belongs to the eukaryotic ribosomal protein eL14 family.

This Pyrobaculum islandicum (strain DSM 4184 / JCM 9189 / GEO3) protein is Large ribosomal subunit protein eL14.